A 216-amino-acid polypeptide reads, in one-letter code: Adenylate kinase (216 aa).

Glycine 10–threonine 15 is an ATP binding site. The tract at residues serine 30–valine 59 is NMP. AMP contacts are provided by residues threonine 31, arginine 36, lysine 57 to valine 59, glycine 85 to arginine 88, and glutamine 92. An LID region spans residues glycine 122–aspartate 159. Residues arginine 123 and isoleucine 132 to tyrosine 133 contribute to the ATP site. Arginine 156 and arginine 167 together coordinate AMP. Position 200 (arginine 200) interacts with ATP.

Belongs to the adenylate kinase family. As to quaternary structure, monomer.

It localises to the cytoplasm. The catalysed reaction is AMP + ATP = 2 ADP. Its pathway is purine metabolism; AMP biosynthesis via salvage pathway; AMP from ADP: step 1/1. Catalyzes the reversible transfer of the terminal phosphate group between ATP and AMP. Plays an important role in cellular energy homeostasis and in adenine nucleotide metabolism. This is Adenylate kinase from Hamiltonella defensa subsp. Acyrthosiphon pisum (strain 5AT).